The following is a 625-amino-acid chain: Phosphomethylpyrimidine synthase (625 aa).

Substrate-binding positions include N231, M260, Y289, H325, 345-347 (SRG), 386-389 (DGLR), and E425. Zn(2+) is bound at residue H429. Y452 lines the substrate pocket. Residue H493 coordinates Zn(2+). C573, C576, and C581 together coordinate [4Fe-4S] cluster.

This sequence belongs to the ThiC family. Homodimer. It depends on [4Fe-4S] cluster as a cofactor.

It catalyses the reaction 5-amino-1-(5-phospho-beta-D-ribosyl)imidazole + S-adenosyl-L-methionine = 4-amino-2-methyl-5-(phosphooxymethyl)pyrimidine + CO + 5'-deoxyadenosine + formate + L-methionine + 3 H(+). It participates in cofactor biosynthesis; thiamine diphosphate biosynthesis. Functionally, catalyzes the synthesis of the hydroxymethylpyrimidine phosphate (HMP-P) moiety of thiamine from aminoimidazole ribotide (AIR) in a radical S-adenosyl-L-methionine (SAM)-dependent reaction. The sequence is that of Phosphomethylpyrimidine synthase from Acinetobacter baumannii (strain SDF).